Consider the following 110-residue polypeptide: Phosphoribosyl-ATP pyrophosphatase (110 aa).

The protein belongs to the PRA-PH family.

It is found in the cytoplasm. It catalyses the reaction 1-(5-phospho-beta-D-ribosyl)-ATP + H2O = 1-(5-phospho-beta-D-ribosyl)-5'-AMP + diphosphate + H(+). The protein operates within amino-acid biosynthesis; L-histidine biosynthesis; L-histidine from 5-phospho-alpha-D-ribose 1-diphosphate: step 2/9. The chain is Phosphoribosyl-ATP pyrophosphatase from Pseudomonas fluorescens (strain Pf0-1).